The chain runs to 190 residues: Guanylate kinase (190 aa).

Positions 3–185 (NYIFIVSAPS…SLEQFCKYFE (183 aa)) constitute a Guanylate kinase-like domain. Residue 10–17 (APSGAGKS) coordinates ATP.

Belongs to the guanylate kinase family.

It localises to the cytoplasm. The enzyme catalyses GMP + ATP = GDP + ADP. In terms of biological role, essential for recycling GMP and indirectly, cGMP. In Francisella tularensis subsp. tularensis (strain FSC 198), this protein is Guanylate kinase.